The sequence spans 1183 residues: PAN2-PAN3 deadenylation complex catalytic subunit PAN2 (1183 aa).

The disordered stretch occupies residues 1 to 24; sequence MDGWTEISRIAATTQPPKGPSPHI. WD repeat units follow at residues 159-207, 269-309, and 327-366; these read DLNK…SIKS, PFPA…NVFL, and SKAP…STIT. A linker region spans residues 369–520; it reads FVNFPASIEQ…FQYKVPLSRK (152 aa). The region spanning 521-919 is the USP domain; it reads KIPNCYSRLQ…KPVILVYHDS (399 aa). Residues 977–1151 enclose the Exonuclease domain; it reads IAIDAEFVNL…EDAYTALLLY (175 aa). Residues Asp980, Glu982, Asp1090, and Asp1143 each coordinate a divalent metal cation.

Belongs to the peptidase C19 family. PAN2 subfamily. As to quaternary structure, forms a heterotrimer with an asymmetric homodimer of the regulatory subunit PAN3 to form the poly(A)-nuclease (PAN) deadenylation complex. Requires a divalent metal cation as cofactor.

The protein resides in the cytoplasm. The enzyme catalyses Exonucleolytic cleavage of poly(A) to 5'-AMP.. Its activity is regulated as follows. Positively regulated by the regulatory subunit PAN3. Catalytic subunit of the poly(A)-nuclease (PAN) deadenylation complex, one of two cytoplasmic mRNA deadenylases involved in mRNA turnover. PAN specifically shortens poly(A) tails of RNA and the activity is stimulated by poly(A)-binding protein PAB1. PAN deadenylation is followed by rapid degradation of the shortened mRNA tails by the CCR4-NOT complex. Deadenylated mRNAs are then degraded by two alternative mechanisms, namely exosome-mediated 3'-5' exonucleolytic degradation, or deadenylation-dependent mRNA decaping and subsequent 5'-3' exonucleolytic degradation by XRN1. May also be involved in post-transcriptional maturation of mRNA poly(A) tails. In Scheffersomyces stipitis (strain ATCC 58785 / CBS 6054 / NBRC 10063 / NRRL Y-11545) (Yeast), this protein is PAN2-PAN3 deadenylation complex catalytic subunit PAN2.